The following is a 362-amino-acid chain: Probable RNA methyltransferase Tbd_1951 (362 aa).

The Proton acceptor role is filled by Glu89. The 227-residue stretch at 92-318 (LLPRDGVCVS…AKLRHSAGQD (227 aa)) folds into the Radical SAM core domain. A disulfide bridge links Cys99 with Cys323. Residues Cys106, Cys110, and Cys113 each coordinate [4Fe-4S] cluster. S-adenosyl-L-methionine is bound by residues 151–152 (GE), Ser181, 204–206 (SLH), and Asn280. Cys323 functions as the S-methylcysteine intermediate in the catalytic mechanism. Residues 342–362 (LPSAETPAASPKAAASIGFPG) form a disordered region. Residues 343-362 (PSAETPAASPKAAASIGFPG) show a composition bias toward low complexity.

It belongs to the radical SAM superfamily. RlmN family. [4Fe-4S] cluster serves as cofactor.

The protein localises to the cytoplasm. This Thiobacillus denitrificans (strain ATCC 25259 / T1) protein is Probable RNA methyltransferase Tbd_1951.